A 2004-amino-acid polypeptide reads, in one-letter code: Histone acetyltransferase KAT6A (2004 aa).

The SAMD1-like winged helix (WH) domain occupies 1–77 (MVKLANPLYT…LNSYKDPDNP (77 aa)). The segment at 1 to 144 (MVKLANPLYT…FGGSAASGFH (144 aa)) is required for activation of RUNX1-1. The interval 52–166 (ELSVKDGTIL…HGRLLKDGPL (115 aa)) is required for nuclear localization. Residues 95–171 (QNVDWNKLIK…KDGPLYRLNT (77 aa)) form the H15 domain. Residues 144–664 (HQQLRLAIKR…RKGYGRFLID (521 aa)) form an interaction with PML region. An N6-acetyllysine modification is found at lysine 172. 2 consecutive PHD-type zinc fingers follow at residues 206 to 265 (IPIC…CKTC) and 259 to 313 (CIEC…CRPR). The interval 312 to 664 (PRKKGRKLLQ…RKGYGRFLID (353 aa)) is interaction with RUNX1-1. A disordered region spans residues 334-375 (PIGRPKNRLKKQNTVSKGPFSKVRTGPGRGRKRKITLSSQSA). Lysine 350 and lysine 355 each carry N6-acetyllysine. Position 369 is a phosphothreonine; by PKB/AKT1 (threonine 369). Serine 420 is modified (phosphoserine). A disordered region spans residues 441–464 (KRGNRKSSTSDWPTDNQDGWDGKQ). Polar residues predominate over residues 446 to 457 (KSSTSDWPTDNQ). The residue at position 473 (serine 473) is a Phosphoserine. The interval 488–778 (IQEQALQKVG…VDPECLRWTP (291 aa)) is catalytic. Positions 504–778 (PQVRCPSVIE…VDPECLRWTP (275 aa)) constitute an MYST-type HAT domain. Positions 507–810 (RCPSVIEFGK…EPQCQERELE (304 aa)) are mediates interaction with BRPF1, required for histone H3 acetyltransferase activity. The C2HC MYST-type zinc finger occupies 537-562 (LYLCEFCLKYMKSRTILQQHMKKCGW). At lysine 604 the chain carries N6-acetyllysine; by autocatalysis. Residues 645 to 649 (SCIMI) and 654 to 660 (QRKGYGR) contribute to the acetyl-CoA site. Glutamate 680 acts as the Proton donor/acceptor in catalysis. Serine 684 contacts acetyl-CoA. Disordered regions lie at residues 785-1445 (VVSE…AYQD), 1461-1621 (QADE…MMQQ), and 1637-1721 (SCVV…MEIP). 2 positions are modified to phosphoserine: serine 787 and serine 812. A compositionally biased stretch (acidic residues) spans 787–803 (SEEEEEEAEEGENEEPQ). At lysine 815 the chain carries N6-acetyllysine. Positions 817–836 (VSHENKEQDSYSVESEKKPE) are enriched in basic and acidic residues. Lysine 834 is covalently cross-linked (Glycyl lysine isopeptide (Lys-Gly) (interchain with G-Cter in SUMO2)). The span at 864 to 873 (RRGRWGRKNR) shows a compositional bias: basic residues. Basic and acidic residues predominate over residues 874 to 888 (KTQERFGDKDSKLLL). Tyrosine 899 carries the post-translational modification Phosphotyrosine. Composition is skewed to basic and acidic residues over residues 931-942 (GKPDLPKRRLSE) and 953-980 (KSPE…DRAV). A phosphoserine mark is found at serine 941, serine 954, and serine 974. Lysine 1007 carries the post-translational modification N6-acetyllysine. The segment covering 1009–1030 (TLKRKKPFLHRRRRVRKRKHHN) has biased composition (basic residues). Residues 1031–1042 (SSVVTETISETT) are compositionally biased toward low complexity. Acidic residues-rich tracts occupy residues 1043 to 1053 (EVLDEPFEDSD) and 1065 to 1078 (FEID…DENE). Serine 1089, serine 1090, and serine 1113 each carry phosphoserine. Over residues 1107 to 1118 (EEEDEESDDADD) the composition is skewed to acidic residues. Residues 1146-1172 (LKKKKGWPKGKSRKPIHWKKRPGRKPG) show a composition bias toward basic residues. Residues 1203 to 1223 (KIQESEETVEPKEDMPLPEER) show a composition bias toward basic and acidic residues. Residues 1224-1245 (KEEEEMQAEAEEAEEGEEEDAA) are compositionally biased toward acidic residues. Over residues 1246 to 1262 (SSEVPAASPADSSNSPE) the composition is skewed to low complexity. Over residues 1275 to 1287 (EKPRVSEEQRQSE) the composition is skewed to basic and acidic residues. The span at 1288 to 1305 (EEQQELEEPEPEEEEDAA) shows a compositional bias: acidic residues. Basic and acidic residues-rich tracts occupy residues 1323–1345 (HLES…KEEP), 1358–1367 (KSREKIKDKE), and 1398–1420 (EDSH…HSEL). Lysine 1342 is covalently cross-linked (Glycyl lysine isopeptide (Lys-Gly) (interchain with G-Cter in SUMO2)). Over residues 1481 to 1503 (SPISSVQSHPSQSVRSVSSPNVP) the composition is skewed to low complexity. The segment covering 1508 to 1529 (GYTQISPEQGSLSAPSMQNMET) has biased composition (polar residues). The tract at residues 1517-1642 (GSLSAPSMQN…KSPQSCVVER (126 aa)) is interaction with RUNX1-2. The segment at 1517-1741 (GSLSAPSMQN…YERIPGDFGA (225 aa)) is interaction with PML. Over residues 1534-1548 (DVPSVSDHSQQVVDS) the composition is skewed to low complexity. Residues 1556 to 1573 (IESTTENYENPSSYDSTM) show a composition bias toward polar residues. Positions 1574–1621 (GGSICGNSSSQSSCSYGGLSSSSSLTQSSCVVTQQMASMGSSCSMMQQ) are enriched in low complexity. Pro residues predominate over residues 1650-1699 (QPPPPPPQQPQPPPPQPQPAPQPPPPQQQPQQQPQPQPQQPPPPPPPQQQ). A compositionally biased stretch (polar residues) spans 1702–1712 (LSQCSMNNSFT). A required for activation of RUNX1-2 region spans residues 1913–1948 (SMNMNTLNAMNSYRMTQPMMNSSYHSNPAYMNQTAQ).

The protein belongs to the MYST (SAS/MOZ) family. In terms of assembly, component of the MOZ/MORF complex composed at least of ING5, KAT6A, KAT6B, MEAF6 and one of BRPF1, BRD1/BRPF2 and BRPF3. Interacts with RUNX1; phosphorylation of RUNX1 enhances the interaction. Interacts with RUNX2. Interacts with p53/TP53. Interacts with PML (isoform PML-4) and this interaction positively regulates its acetylation activity towards p53/TP53. Post-translationally, autoacetylation at Lys-604 is required for proper function. Autoacetylated. Phosphorylation at Thr-369 by PKB/AKT1 inhibits its interaction with PML and negatively regulates its acetylation activity towards p53/TP53.

The protein localises to the nucleus. The protein resides in the nucleolus. Its subcellular location is the nucleoplasm. It is found in the PML body. The catalysed reaction is L-lysyl-[protein] + acetyl-CoA = N(6)-acetyl-L-lysyl-[protein] + CoA + H(+). Its function is as follows. Histone acetyltransferase that acetylates lysine residues in histone H3 and histone H4 (in vitro). Component of the MOZ/MORF complex which has a histone H3 acetyltransferase activity. May act as a transcriptional coactivator for RUNX1 and RUNX2. Acetylates p53/TP53 at 'Lys-120' and 'Lys-382' and controls its transcriptional activity via association with PML. The polypeptide is Histone acetyltransferase KAT6A (KAT6A) (Homo sapiens (Human)).